The sequence spans 128 residues: MQKIVRNRLIKIIICFCSACLGISIILYNLEKNIIFFFPPSKINEAEQGKELRVGGLVKRDSINKISANKISFVITDNIKDLEILYQGVLPALFREGQGIIAIGQLSDSKFIARQLLAKHDENYRPPS.

The Cytoplasmic segment spans residues Met1–Arg8. Residues Leu9–Asn29 form a helical; Signal-anchor for type II membrane protein membrane-spanning segment. At Leu30–Ser128 the chain is on the periplasmic side. 2 residues coordinate heme: His120 and Tyr124.

The protein belongs to the CcmE/CycJ family.

Its subcellular location is the cell inner membrane. Its function is as follows. Heme chaperone required for the biogenesis of c-type cytochromes. Transiently binds heme delivered by CcmC and transfers the heme to apo-cytochromes in a process facilitated by CcmF and CcmH. This is Cytochrome c-type biogenesis protein CcmE from Rickettsia prowazekii (strain Madrid E).